The primary structure comprises 60 residues: Conotoxin PnMRCL-022 (60 aa).

The signal sequence occupies residues methionine 1–alanine 22. A propeptide spanning residues arginine 23–serine 45 is cleaved from the precursor.

Belongs to the conotoxin T superfamily. Contains 2 disulfide bonds that can be either 'C1-C3, C2-C4' or 'C1-C4, C2-C3', since these disulfide connectivities have been observed for conotoxins with cysteine framework V (for examples, see AC P0DQQ7 and AC P81755). Expressed by the venom duct.

The protein localises to the secreted. This is Conotoxin PnMRCL-022 from Conus pennaceus (Feathered cone).